Reading from the N-terminus, the 93-residue chain is GWPAYPGRNGIRSSVCQKKLGCGWRKLASLPVCKAFCLARKRFWQKCGKNGSSGKGSKICKSVIAHTFEKAGKGLIKLTDMAVATIIKYAGKK.

Disulfide bonds link Cys16–Cys37, Cys22–Cys33, and Cys47–Cys60.

It belongs to the worm cytolysin family. In terms of tissue distribution, localized within the skin and proboscis and are most readily isolated from body mucus secretions.

The protein localises to the secreted. In terms of biological role, cytolysin that shows hemolytic activity (on bovine erythrocytes, HC(50)=5.75 mg/ml). This hemolytic activity is completely inhibited by small unilamelar vesicles composed of PC/PG, PC/PI and PC/PS in 1:1 molar ratios (with at least 100 mg/ml concentration). The recombinant protein does not show hemolytic activity, suggesting that it is not properly folded or that it requires a free N-terminal end for its activity. This is Parbolysin P1 from Parborlasia corrugatus (Antarctic nemertean worm).